We begin with the raw amino-acid sequence, 269 residues long: Adenylate kinase (269 aa).

61–66 contributes to the ATP binding site; it reads GAGKGT. The interval 81-110 is NMP; it reads ATGDMLREQVARQTELGKAAKQIMDQGGLV. AMP-binding positions include Thr82, Arg87, 108 to 110, 137 to 140, and Gln144; these read GLV and GFPR. The segment at 178–215 is LID; the sequence is GRLVHPASGRSYHKEFNPPKKPMTDDITGEPLIQRSDD. ATP contacts are provided by residues Arg179 and 188–189; that span reads SY. AMP is bound by residues Arg212 and Arg223. An ATP-binding site is contributed by Gln251.

Belongs to the adenylate kinase family. AK2 subfamily. As to quaternary structure, monomer.

The protein resides in the cytoplasm. Its subcellular location is the cytosol. The protein localises to the mitochondrion intermembrane space. The enzyme catalyses AMP + ATP = 2 ADP. Catalyzes the reversible transfer of the terminal phosphate group between ATP and AMP. Plays an important role in cellular energy homeostasis and in adenine nucleotide metabolism. Adenylate kinase activity is critical for regulation of the phosphate utilization and the AMP de novo biosynthesis pathways. The sequence is that of Adenylate kinase from Cryptococcus neoformans var. neoformans serotype D (strain B-3501A) (Filobasidiella neoformans).